Reading from the N-terminus, the 302-residue chain is Trans-4-hydroxy-L-proline dehydratase activating enzyme (302 aa).

One can recognise a Radical SAM core domain in the interval 14–297 (HDGPGIRSTV…KRLFEASNFN (284 aa)). 7 residues coordinate [4Fe-4S] cluster: Cys28, Cys32, Cys35, Cys54, Cys57, Cys60, and Cys93. 34-36 (WCH) serves as a coordination point for S-adenosyl-L-methionine. 4Fe-4S ferredoxin-type domains follow at residues 45 to 74 (KQVL…KGET) and 75 to 103 (KICL…IVGQ). S-adenosyl-L-methionine is bound by residues Gly133, 183–185 (DIK), and His257.

This sequence belongs to the organic radical-activating enzymes family. [4Fe-4S] cluster is required as a cofactor.

It carries out the reaction glycyl-[protein] + reduced [flavodoxin] + S-adenosyl-L-methionine = glycin-2-yl radical-[protein] + semiquinone [flavodoxin] + 5'-deoxyadenosine + L-methionine + H(+). Functionally, catalyzes activation of the trans-4-hydroxy-L-proline dehydratase under anaerobic conditions by generation of an organic free radical on a glycine residue, via a homolytic cleavage of S-adenosyl-L-methionine (SAM). Is involved in the anaerobic degradation of 4-hydroxyproline. This is Trans-4-hydroxy-L-proline dehydratase activating enzyme from Clostridioides difficile (Peptoclostridium difficile).